The sequence spans 975 residues: Importin-11 (975 aa).

Met-1 carries the N-acetylmethionine modification. Positions Ala-28–Glu-100 constitute an Importin N-terminal domain. HEAT repeat units follow at residues Arg-123–Ser-160, Glu-209–Gln-248, Val-318–Phe-356, Gln-422–Leu-459, Trp-473–Lys-509, Asp-511–Phe-548, Pro-555–Met-593, Gly-600–Ala-636, Asn-640–Asn-677, Pro-683–Glu-720, Glu-743–Pro-764, Gln-765–Ser-804, Gln-819–Ala-849, Leu-850–Glu-887, and Met-957–Gly-974. A Phosphoserine modification is found at Ser-343.

This sequence belongs to the importin beta family. Interacts with UBE2E3 and RPL12.

It is found in the cytoplasm. Its subcellular location is the nucleus. Functionally, functions in nuclear protein import as nuclear transport receptor. Serves as receptor for nuclear localization signals (NLS) in cargo substrates. Is thought to mediate docking of the importin/substrate complex to the nuclear pore complex (NPC) through binding to nucleoporin and the complex is subsequently translocated through the pore by an energy requiring, Ran-dependent mechanism. At the nucleoplasmic side of the NPC, Ran binds to the importin, the importin/substrate complex dissociates and importin is re-exported from the nucleus to the cytoplasm where GTP hydrolysis releases Ran. The directionality of nuclear import is thought to be conferred by an asymmetric distribution of the GTP- and GDP-bound forms of Ran between the cytoplasm and nucleus. Mediates the nuclear import of UBE2E3, and of RPL12. This Homo sapiens (Human) protein is Importin-11 (IPO11).